The primary structure comprises 736 residues: Probable methionine--tRNA ligase, cytoplasmic (736 aa).

The short motif at 25–35 (PYVNNVPHLGN) is the 'HIGH' region element. A 'KMSKS' region motif is present at residues 346–350 (KFSKS). Residue lysine 349 participates in ATP binding. Residues 573–680 (PEFPIDMKIA…QSIEAGSKIA (108 aa)) form the tRNA-binding domain.

Belongs to the class-I aminoacyl-tRNA synthetase family.

The protein resides in the cytoplasm. The enzyme catalyses tRNA(Met) + L-methionine + ATP = L-methionyl-tRNA(Met) + AMP + diphosphate. The sequence is that of Probable methionine--tRNA ligase, cytoplasmic (metS) from Dictyostelium discoideum (Social amoeba).